The following is a 189-amino-acid chain: MIDEKNQAKIEHAVREILSAVGEDPDRPGLVETPARVARMYAEVFATKTAAPFDNYKLFKVEHPTEMVLLKDIPFYSMCEHHLLPFFGTVQVAYVPQHEQVIGLSKIPRLIDYCSQQPNVQERLTVSIATELQRILDPAGIAVSITARHMCMEMRGVSKPGVHTESSYYSGQFKTDLDLKREFLQRIAK.

Zn(2+) is bound by residues Cys79, His82, and Cys151.

This sequence belongs to the GTP cyclohydrolase I family. As to quaternary structure, toroid-shaped homodecamer, composed of two pentamers of five dimers.

It catalyses the reaction GTP + H2O = 7,8-dihydroneopterin 3'-triphosphate + formate + H(+). It participates in cofactor biosynthesis; 7,8-dihydroneopterin triphosphate biosynthesis; 7,8-dihydroneopterin triphosphate from GTP: step 1/1. The chain is GTP cyclohydrolase 1 from Lactiplantibacillus plantarum (strain ATCC BAA-793 / NCIMB 8826 / WCFS1) (Lactobacillus plantarum).